Here is a 359-residue protein sequence, read N- to C-terminus: Cinnamyl alcohol dehydrogenase 8 (359 aa).

Cys46 provides a ligand contact to Zn(2+). Ser48 contributes to the NADP(+) binding site. Residues His68, Glu69, Cys99, Cys102, Cys105, Cys113, and Cys162 each coordinate Zn(2+). Residues Thr166, 187–192 (GLGGLG), 210–215 (STSEKK), Thr250, Gly274, and 297–299 (SMI) each bind NADP(+).

Belongs to the zinc-containing alcohol dehydrogenase family. As to quaternary structure, homodimer. The cofactor is Zn(2+). As to expression, expressed in the differentiation and elongation zones of primary and lateral roots. Expressed in the hypocotyl, cotyledon veins, vasculature of the first rosette leaves, hydathodes and trichomes. In stems, expressed in the vascular cambium and developing xylem tissues. Expressed in the style, anthers, stamen filaments, stigmatic regions in flowers, and abscission and style regions of siliques.

It carries out the reaction (E)-cinnamyl alcohol + NADP(+) = (E)-cinnamaldehyde + NADPH + H(+). It functions in the pathway aromatic compound metabolism; phenylpropanoid biosynthesis. In terms of biological role, involved in lignin biosynthesis. Catalyzes the final step specific for the production of lignin monomers. Catalyzes the NADPH-dependent reduction of coniferaldehyde, 5-hydroxyconiferaldehyde, sinapaldehyde, 4-coumaraldehyde and caffeyl aldehyde to their respective alcohols. This chain is Cinnamyl alcohol dehydrogenase 8 (CAD8), found in Arabidopsis thaliana (Mouse-ear cress).